The chain runs to 522 residues: Peptide methionine sulfoxide reductase MsrA/MsrB (522 aa).

Residues 17–174 form the Thioredoxin domain; it reads LALGACSPKI…ALALIRNPNA (158 aa). A disulfide bridge links Cys68 with Cys71. Residues 199–354 are peptide methionine sulfoxide reductase A; it reads RTIYLAGGCF…PNGYCHIDIR (156 aa). Residue Cys207 is part of the active site. Residues 383–506 enclose the MsrB domain; the sequence is DAELKRTLTE…NGASLKFIPL (124 aa). An intrachain disulfide couples Cys440 to Cys495. The active-site Nucleophile is the Cys495.

In the N-terminal section; belongs to the thioredoxin family. It in the central section; belongs to the MsrA Met sulfoxide reductase family. The protein in the C-terminal section; belongs to the MsrB Met sulfoxide reductase family.

It catalyses the reaction L-methionyl-[protein] + [thioredoxin]-disulfide + H2O = L-methionyl-(S)-S-oxide-[protein] + [thioredoxin]-dithiol. The catalysed reaction is [thioredoxin]-disulfide + L-methionine + H2O = L-methionine (S)-S-oxide + [thioredoxin]-dithiol. It carries out the reaction L-methionyl-[protein] + [thioredoxin]-disulfide + H2O = L-methionyl-(R)-S-oxide-[protein] + [thioredoxin]-dithiol. Its function is as follows. Has an important function as a repair enzyme for proteins that have been inactivated by oxidation. Catalyzes the reversible oxidation-reduction of methionine sulfoxide in proteins to methionine. This is Peptide methionine sulfoxide reductase MsrA/MsrB (msrAB) from Neisseria gonorrhoeae.